The following is a 122-amino-acid chain: Large ribosomal subunit protein bL20c (122 aa).

It belongs to the bacterial ribosomal protein bL20 family.

The protein localises to the plastid. It localises to the chloroplast. Functionally, binds directly to 23S ribosomal RNA and is necessary for the in vitro assembly process of the 50S ribosomal subunit. It is not involved in the protein synthesizing functions of that subunit. The sequence is that of Large ribosomal subunit protein bL20c from Dioscorea elephantipes (Elephant's foot yam).